The primary structure comprises 518 residues: MALFSAYALAFSLLMIPLILYILRIGRRESGLPPGPSTLPLVGNLHQLPHGGLHLQFTAWAKEFGGIFSLKFGPGTVIVATSPRAVRELIDQKSASTSDRPPSHFSNVITGGNNIGFARYSDYWRRGRRVMHSMLTKKACVNHLTIQRAEASQLMYDYLVEPKEFVAHGQRYANSVITSILAGTRSPHHTSPLVTAFFQMQHEWTHLLTPGAHPPVDMVPFLKYIPGSWKQICAKMKVSQEELYGGMIDACAKRVERGIRNGCFLEGELENKDVDRGLLRGMCSALMEGGSDSTSIYLQSFILMLVAHPEVQAKARAEIDSVVGLDRLPDIEDMDNLPYVSAVIKEVLRLRPITALGAPHYSTQPEVVDGYVIPKNSMIFMNQWGMLHDPDSYDQPESFMPERFLTSPFGTKPGADDTGRSKDIYFGGGRRICVGMHFGQNSLAITSMYLIWAFNLTNAIDPQTKNPIPVDINEYDISLNTIPKPFKCDFQVRSEEHKRMVENAFAEARQVFAPFEQD.

A helical transmembrane segment spans residues L3–L23. C433 provides a ligand contact to heme. The N-linked (GlcNAc...) asparagine glycan is linked to N455.

This sequence belongs to the cytochrome P450 family. Heme is required as a cofactor.

It is found in the membrane. It functions in the pathway secondary metabolite biosynthesis. Cytochrome P450 monooxygenase, part of the gene cluster that mediates the biosynthesis of melleolides, a range of antifungal and phytotoxic polyketide derivatives composed of an orsellinic acid (OA) moiety esterified to various sesquiterpene alcohols. The first step in melleolides biosynthesis is performed by the delta(6)-protoilludene synthase PRO1 which catalyzes the cyclization of farnesyl diphosphate to protoilludene. The orsellinic acid synthase armB produces OA by condensing acetyl-CoA with 3 malonyl-CoA units in a three-round chain elongation reaction folowed by a C2-C7 ring closure. ArmB further catalyzes the trans-esterification of OA to the various sesquiterpene alcohols resulting from the hydroxylation of protoilludene. The melleolides cluster also includes 5 cytochrome P450 monooxygenases, 4 NAD(+)-dependent oxidoreductases, one flavin-dependent oxidoreductase, and one O-methyltransferase. The cytochrome P450 monooxygenases may be involved in protoilludene hydroxylation to elaborate melleolides with multiple alcohol groups, such as melleolide D, which carries alcohol functionalities at C-4, C-5, C-10, and C-13. The role of the NAD(+)-dependent enzymes remains unknown. Numerous melleolides, including arnamial, show 5'-O-methylation of the aromatic moiety which may be catalyzed by the methyltransferase encoded in the cluster. The flavin-dependent oxidoreductase might represent the dehydrogenase yielding the aldehyde in position 1 of arnamial and other melleolides. Finally, several halogenase localized outside of the cluster, are able to catalyze the transfer of a single chlorine atom to the melleolide backbone, resulting in a 6'-chloromelleolide product. In Armillaria gallica (Bulbous honey fungus), this protein is Cytochrome P450 monooxygenase ARMGADRAFT_1018417.